Here is a 99-residue protein sequence, read N- to C-terminus: Large ribosomal subunit protein uL23 (99 aa).

Belongs to the universal ribosomal protein uL23 family. As to quaternary structure, part of the 50S ribosomal subunit. Contacts protein L29, and trigger factor when it is bound to the ribosome.

Functionally, one of the early assembly proteins it binds 23S rRNA. One of the proteins that surrounds the polypeptide exit tunnel on the outside of the ribosome. Forms the main docking site for trigger factor binding to the ribosome. This is Large ribosomal subunit protein uL23 from Rhodopseudomonas palustris (strain HaA2).